The primary structure comprises 245 residues: Ribonuclease 3 (245 aa).

The region spanning 17-146 (FTDKMKSLGL…FVGALYLDQG (130 aa)) is the RNase III domain. Glu59 serves as a coordination point for Mg(2+). Asp63 is a catalytic residue. Mg(2+) is bound by residues Asp132 and Glu135. Glu135 is a catalytic residue. The DRBM domain occupies 172 to 241 (DFKTQFQEYV…AEQAYKLMKN (70 aa)).

The protein belongs to the ribonuclease III family. In terms of assembly, homodimer. The cofactor is Mg(2+).

The protein resides in the cytoplasm. The enzyme catalyses Endonucleolytic cleavage to 5'-phosphomonoester.. Digests double-stranded RNA. Involved in the processing of primary rRNA transcript to yield the immediate precursors to the large and small rRNAs (23S and 16S). Processes some mRNAs, and tRNAs when they are encoded in the rRNA operon. Processes pre-crRNA and tracrRNA of type II CRISPR loci if present in the organism. The protein is Ribonuclease 3 of Staphylococcus epidermidis (strain ATCC 12228 / FDA PCI 1200).